The chain runs to 301 residues: Ornithine carbamoyltransferase (301 aa).

Residues Arg100 and 127 to 130 (HPCQ) contribute to the carbamoyl phosphate site. Residues Asn158, Asp221, and 225-226 (SM) contribute to the L-ornithine site. Carbamoyl phosphate-binding residues include Cys260 and Arg288.

It belongs to the aspartate/ornithine carbamoyltransferase superfamily. OTCase family.

The protein localises to the cytoplasm. It carries out the reaction carbamoyl phosphate + L-ornithine = L-citrulline + phosphate + H(+). It functions in the pathway amino-acid biosynthesis; L-arginine biosynthesis; L-arginine from L-ornithine and carbamoyl phosphate: step 1/3. Reversibly catalyzes the transfer of the carbamoyl group from carbamoyl phosphate (CP) to the N(epsilon) atom of ornithine (ORN) to produce L-citrulline. The sequence is that of Ornithine carbamoyltransferase (argF) from Vibrio sp. (strain 2693).